The following is a 350-amino-acid chain: fMet-Leu-Phe receptor (350 aa).

The Extracellular portion of the chain corresponds to 1-27; that stretch reads METNSSLPTNISGGTPAVSAGYLFLDI. N-linked (GlcNAc...) asparagine glycosylation is found at Asn4 and Asn10. A helical transmembrane segment spans residues 28-50; sequence ITYLVFAVTFVLGVLGNGLVIWV. Residues 51 to 61 lie on the Cytoplasmic side of the membrane; sequence AGFRMTHTVTT. Residues 62–83 traverse the membrane as a helical segment; the sequence is ISYLNLAVADFCFTSTLPFFMV. Residues 84 to 100 lie on the Extracellular side of the membrane; that stretch reads RKAMGGHWPFGWFLCKF. A disulfide bond links Cys98 and Cys176. The helical transmembrane segment at 101–121 threads the bilayer; that stretch reads VFTIVDINLFGSVFLIALIAL. The Cytoplasmic segment spans residues 122 to 140; the sequence is DRCVCVLHPVWTQNHRTVS. A helical transmembrane segment spans residues 141-162; sequence LAKKVIIGPWVMALLLTLPVII. Over 163 to 205 the chain is Extracellular; sequence RVTTVPGKTGTVACTFNFSPWTNDPKERINVAVAMLTVRGIIR. A helical transmembrane segment spans residues 206–226; sequence FIIGFSAPMSIVAVSYGLIAT. Residues 227–242 lie on the Cytoplasmic side of the membrane; sequence KIHKQGLIKSSRPLRV. A helical transmembrane segment spans residues 243–266; that stretch reads LSFVAAAFFLCWSPYQVVALIATV. At 267–285 the chain is on the extracellular side; it reads RIRELLQGMYKEIGIAVDV. A helical transmembrane segment spans residues 286 to 305; sequence TSALAFFNSCLNPMLYVFMG. The Cytoplasmic portion of the chain corresponds to 306 to 350; sequence QDFRERLIHALPASLERALTEDSTQTSDTATNSTLPSAEVELQAK. The tract at residues 325–350 is disordered; it reads TEDSTQTSDTATNSTLPSAEVELQAK. A compositionally biased stretch (polar residues) spans 326–341; sequence EDSTQTSDTATNSTLP. Residue Ser328 is modified to Phosphoserine. A phosphothreonine mark is found at Thr329 and Thr331. Phosphoserine is present on Ser332. 2 positions are modified to phosphothreonine: Thr334 and Thr336. Ser338 carries the phosphoserine modification. Phosphothreonine is present on Thr339.

This sequence belongs to the G-protein coupled receptor 1 family. Interacts with S.aureus chemotaxis inhibitory protein (CHIPS); the interaction blocks the receptor and may thus inhibit the immune response. In terms of processing, phosphorylated; which is necessary for desensitization. In terms of tissue distribution, neutrophils.

It is found in the cell membrane. In terms of biological role, high affinity receptor for N-formyl-methionyl peptides (fMLP), which are powerful neutrophil chemotactic factors. Binding of fMLP to the receptor stimulates intracellular calcium mobilization and superoxide anion release. This response is mediated via a G-protein that activates a phosphatidylinositol-calcium second messenger system. Receptor for TAFA4, mediates its effects on chemoattracting macrophages, promoting phagocytosis and increasing ROS release. Receptor for cathepsin CTSG, leading to increased phagocyte chemotaxis. This is fMet-Leu-Phe receptor (FPR1) from Homo sapiens (Human).